Here is a 742-residue protein sequence, read N- to C-terminus: Synaptic vesicle glycoprotein 2A (742 aa).

Positions 1 to 57 (MEEGFRDRAAFIRGAKDIAKEVKKHAAKKVVKGLDRVQDEYSRRSYSRFEEEDDDDD) are interaction with SYT1. Residues 1–169 (MEEGFRDRAA…GHGRFQWTLY (169 aa)) are Cytoplasmic-facing. Basic and acidic residues predominate over residues 33 to 49 (GLDRVQDEYSRRSYSRF). Residues 33–144 (GLDRVQDEYS…GRGEAQRRKE (112 aa)) are disordered. Residues S80 and S81 each carry the phosphoserine modification. Residue T84 is modified to Phosphothreonine. Positions 122–137 (VRGGLSDGEGPPGGRG) are enriched in gly residues. S127 is subject to Phosphoserine. A helical membrane pass occupies residues 170 to 190 (FVLGLALMADGVEVFVVGFVL). The Extracellular segment spans residues 191-205 (PSAEKDMCLSDSNKG). The chain crosses the membrane as a helical span at residues 206–226 (MLGLIVYLGMMVGAFLWGGLA). The Cytoplasmic portion of the chain corresponds to 227 to 233 (DRLGRRQ). Residues 234 to 254 (CLLISLSVNSVFAFFSSFVQG) form a helical membrane-spanning segment. Residues 255–262 (YGTFLFCR) are Extracellular-facing. A helical transmembrane segment spans residues 263–283 (LLSGVGIGGSIPIVFSYFSEF). Over 284 to 294 (LAQEKRGEHLS) the chain is Cytoplasmic. Residues 295 to 315 (WLCMFWMIGGVYAAAMAWAII) form a helical membrane-spanning segment. Residues 316–334 (PHYGWSFQMGSAYQFHSWR) are Extracellular-facing. A helical transmembrane segment spans residues 335 to 355 (VFVLVCAFPSVFAIGALTTQP). At 356–447 (ESPRFFLENG…CFGPEYRRIT (92 aa)) the chain is on the cytoplasmic side. The residue at position 393 (S393) is a Phosphoserine. The helical transmembrane segment at 448-468 (LMMMGVWFTMSFSYYGLTVWF) threads the bilayer. Over 469-598 (PDMIRHLQAV…GTGEGAYMVY (130 aa)) the chain is Extracellular. Y480 carries the phosphotyrosine modification. 3 N-linked (GlcNAc...) asparagine glycosylation sites follow: N498, N548, and N573. The helical transmembrane segment at 599–619 (FVSFLGTLAVLPGNIVSALLM) threads the bilayer. Residues 620–626 (DKIGRLR) lie on the Cytoplasmic side of the membrane. A helical transmembrane segment spans residues 627-647 (MLAGSSVMSCVSCFFLSFGNS). Residues 648–651 (ESAM) are Extracellular-facing. A helical membrane pass occupies residues 652-672 (IALLCLFGGVSIASWNALDVL). The Cytoplasmic portion of the chain corresponds to 673–690 (TVGLYPSDKRTTAFGFLN). A helical transmembrane segment spans residues 691-711 (ALCKLAAVLGISIFTSFVGIT). Residue K712 is a topological domain, extracellular. A helical membrane pass occupies residues 713–733 (AAPIPFASAALALGSSLALKL). The Cytoplasmic portion of the chain corresponds to 734–742 (PETRGQVLQ).

The protein belongs to the major facilitator superfamily. Interacts with SYT1/synaptotagmin-1 in a calcium-dependent manner. Binds the adapter protein complex AP-2. Phosphorylation by CK1 of the N-terminal cytoplasmic domain regulates interaction with SYT1. Post-translationally, N-glycosylated.

Its subcellular location is the presynapse. The protein localises to the cytoplasmic vesicle. It localises to the secretory vesicle. The protein resides in the synaptic vesicle membrane. Plays a role in the control of regulated secretion in neural and endocrine cells, enhancing selectively low-frequency neurotransmission. Positively regulates vesicle fusion by maintaining the readily releasable pool of secretory vesicles. The protein is Synaptic vesicle glycoprotein 2A (SV2A) of Macaca fascicularis (Crab-eating macaque).